Here is a 503-residue protein sequence, read N- to C-terminus: Catalase (503 aa).

The first 21 residues, 1–21, serve as a signal peptide directing secretion; it reads MHMSKSFLIISMGFVAVSVQA. Catalysis depends on residues His72 and Asn145. Position 353 (Tyr353) interacts with heme.

The protein belongs to the catalase family. Heme serves as cofactor.

The protein localises to the periplasm. The catalysed reaction is 2 H2O2 = O2 + 2 H2O. Its function is as follows. Decomposes hydrogen peroxide into water and oxygen; serves to protect cells from the toxic effects of hydrogen peroxide. This chain is Catalase, found in Vibrio cholerae serotype O1 (strain ATCC 39315 / El Tor Inaba N16961).